The primary structure comprises 92 residues: YcgL domain-containing protein ASA_2166 (92 aa).

Positions 1-85 (MLCAVYKSRK…PPENLLEQHK (85 aa)) constitute a YcgL domain.

This chain is YcgL domain-containing protein ASA_2166, found in Aeromonas salmonicida (strain A449).